Reading from the N-terminus, the 140-residue chain is Small ribosomal subunit protein uS9A (140 aa).

This sequence belongs to the universal ribosomal protein uS9 family. As to quaternary structure, component of the small ribosomal subunit (SSU). Mature yeast ribosomes consist of a small (40S) and a large (60S) subunit. The 40S small subunit contains 1 molecule of ribosomal RNA (18S rRNA) and at least 33 different proteins. The large 60S subunit contains 3 rRNA molecules (25S, 5.8S and 5S rRNA) and at least 46 different proteins.

It localises to the cytoplasm. Functionally, component of the ribosome, a large ribonucleoprotein complex responsible for the synthesis of proteins in the cell. The small ribosomal subunit (SSU) binds messenger RNAs (mRNAs) and translates the encoded message by selecting cognate aminoacyl-transfer RNA (tRNA) molecules. The large subunit (LSU) contains the ribosomal catalytic site termed the peptidyl transferase center (PTC), which catalyzes the formation of peptide bonds, thereby polymerizing the amino acids delivered by tRNAs into a polypeptide chain. The nascent polypeptides leave the ribosome through a tunnel in the LSU and interact with protein factors that function in enzymatic processing, targeting, and the membrane insertion of nascent chains at the exit of the ribosomal tunnel. This chain is Small ribosomal subunit protein uS9A (rps1601), found in Schizosaccharomyces pombe (strain 972 / ATCC 24843) (Fission yeast).